A 439-amino-acid chain; its full sequence is Tol-Pal system protein TolB (439 aa).

A signal peptide spans 1–22; it reads MKKPLRWLAALTVLLLPLSALA.

Belongs to the TolB family. The Tol-Pal system is composed of five core proteins: the inner membrane proteins TolA, TolQ and TolR, the periplasmic protein TolB and the outer membrane protein Pal. They form a network linking the inner and outer membranes and the peptidoglycan layer.

It localises to the periplasm. Its function is as follows. Part of the Tol-Pal system, which plays a role in outer membrane invagination during cell division and is important for maintaining outer membrane integrity. The polypeptide is Tol-Pal system protein TolB (Xanthomonas oryzae pv. oryzae (strain PXO99A)).